A 340-amino-acid chain; its full sequence is MNKWPRIMELIVAFGLIVFKVALLIAILLLLPLPLTWLERKIAGHMQQRMGPMRVGWHGLLQPVADGIKLLTKEDHIPAEADRFLFKLAPILALAPPFVVFVAIPFGETISVRGTEITLYLSNMNVALLFVFAVIGIEVFGVIFGGWAANSKYAVLGSLRTCAQMISYEIPMGFAVIGVVMLAQSMSLLDIVRAQTDVWNIVYQPVGFFVFFVAGLAEAQRIPFDLAEAEGDLGAGFHTEYSGIRFAFFMVSEYVIVLLVSVLLVILFFGGWNGILVPMPPLLWFLLKVAFFVYLFIWFRFTFPRYRYDQLMAIGWKVLLPLSMANIIITGVLLGAAAAP.

The next 8 membrane-spanning stretches (helical) occupy residues 10–30 (LIVA…ILLL), 84–104 (FLFK…FVAI), 126–146 (VALL…IFGG), 172–192 (MGFA…LDIV), 198–218 (VWNI…GLAE), 255–275 (VIVL…WNGI), 279–299 (MPPL…FIWF), and 318–338 (VLLP…GAAA).

It belongs to the complex I subunit 1 family. NDH-1 is composed of 14 different subunits. Subunits NuoA, H, J, K, L, M, N constitute the membrane sector of the complex.

It localises to the cell inner membrane. It carries out the reaction a quinone + NADH + 5 H(+)(in) = a quinol + NAD(+) + 4 H(+)(out). NDH-1 shuttles electrons from NADH, via FMN and iron-sulfur (Fe-S) centers, to quinones in the respiratory chain. The immediate electron acceptor for the enzyme in this species is believed to be ubiquinone. Couples the redox reaction to proton translocation (for every two electrons transferred, four hydrogen ions are translocated across the cytoplasmic membrane), and thus conserves the redox energy in a proton gradient. This subunit may bind ubiquinone. In Rhizobium etli (strain ATCC 51251 / DSM 11541 / JCM 21823 / NBRC 15573 / CFN 42), this protein is NADH-quinone oxidoreductase subunit H 2.